The following is a 240-amino-acid chain: Purine nucleoside phosphorylase DeoD-type (240 aa).

His-5 lines the a purine D-ribonucleoside pocket. Residues Gly-21, Arg-25, Arg-44, and Arg-88–Ser-91 contribute to the phosphate site. Residues Glu-180 to Glu-182 and Ser-204 to Asp-205 contribute to the a purine D-ribonucleoside site. The Proton donor role is filled by Asp-205.

It belongs to the PNP/UDP phosphorylase family. In terms of assembly, homohexamer; trimer of homodimers.

The catalysed reaction is a purine D-ribonucleoside + phosphate = a purine nucleobase + alpha-D-ribose 1-phosphate. It carries out the reaction a purine 2'-deoxy-D-ribonucleoside + phosphate = a purine nucleobase + 2-deoxy-alpha-D-ribose 1-phosphate. Catalyzes the reversible phosphorolytic breakdown of the N-glycosidic bond in the beta-(deoxy)ribonucleoside molecules, with the formation of the corresponding free purine bases and pentose-1-phosphate. This Actinobacillus pleuropneumoniae serotype 5b (strain L20) protein is Purine nucleoside phosphorylase DeoD-type.